Reading from the N-terminus, the 202-residue chain is Ribosome maturation factor RimM (202 aa).

The 82-residue stretch at 121–202 (KDEYYWVDLI…CITVDWQPDY (82 aa)) folds into the PRC barrel domain.

This sequence belongs to the RimM family. In terms of assembly, binds ribosomal protein uS19.

It localises to the cytoplasm. Its function is as follows. An accessory protein needed during the final step in the assembly of 30S ribosomal subunit, possibly for assembly of the head region. Essential for efficient processing of 16S rRNA. May be needed both before and after RbfA during the maturation of 16S rRNA. It has affinity for free ribosomal 30S subunits but not for 70S ribosomes. The sequence is that of Ribosome maturation factor RimM from Polaromonas sp. (strain JS666 / ATCC BAA-500).